A 175-amino-acid polypeptide reads, in one-letter code: Probable DNA-directed RNA polymerase subunit delta (175 aa).

Residues M14–W81 form the HTH HARE-type domain. Residues L110–D175 form a disordered region.

The protein belongs to the RpoE family. In terms of assembly, RNAP is composed of a core of 2 alpha, a beta and a beta' subunits. The core is associated with a delta subunit and one of several sigma factors.

Its function is as follows. Participates in both the initiation and recycling phases of transcription. In the presence of the delta subunit, RNAP displays an increased specificity of transcription, a decreased affinity for nucleic acids, and an increased efficiency of RNA synthesis because of enhanced recycling. The sequence is that of Probable DNA-directed RNA polymerase subunit delta from Bacillus velezensis (strain DSM 23117 / BGSC 10A6 / LMG 26770 / FZB42) (Bacillus amyloliquefaciens subsp. plantarum).